Reading from the N-terminus, the 270-residue chain is Sulfur carrier protein FdhD (270 aa).

The Cysteine persulfide intermediate role is filled by Cys108. Phe247–Arg252 provides a ligand contact to Mo-bis(molybdopterin guanine dinucleotide).

It belongs to the FdhD family.

It localises to the cytoplasm. Functionally, required for formate dehydrogenase (FDH) activity. Acts as a sulfur carrier protein that transfers sulfur from IscS to the molybdenum cofactor prior to its insertion into FDH. In Halalkalibacterium halodurans (strain ATCC BAA-125 / DSM 18197 / FERM 7344 / JCM 9153 / C-125) (Bacillus halodurans), this protein is Sulfur carrier protein FdhD.